The sequence spans 459 residues: Cysteine--tRNA ligase (459 aa).

Zn(2+) is bound at residue Cys31. The short motif at 33 to 43 is the 'HIGH' region element; it reads PTVYDNPHIGN. Positions 216, 241, and 245 each coordinate Zn(2+). The 'KMSKS' region signature appears at 274 to 278; sequence KMSKS. Residue Lys277 coordinates ATP.

The protein belongs to the class-I aminoacyl-tRNA synthetase family. Monomer. Zn(2+) is required as a cofactor.

It localises to the cytoplasm. The catalysed reaction is tRNA(Cys) + L-cysteine + ATP = L-cysteinyl-tRNA(Cys) + AMP + diphosphate. The polypeptide is Cysteine--tRNA ligase (Rickettsia canadensis (strain McKiel)).